We begin with the raw amino-acid sequence, 29 residues long: Cytochrome b6-f complex subunit 8 (29 aa).

Residues 3–23 (IVSIAWAALMVVFTFSLSLVV) traverse the membrane as a helical segment.

Belongs to the PetN family. In terms of assembly, the 4 large subunits of the cytochrome b6-f complex are cytochrome b6, subunit IV (17 kDa polypeptide, PetD), cytochrome f and the Rieske protein, while the 4 small subunits are PetG, PetL, PetM and PetN. The complex functions as a dimer.

The protein localises to the plastid. The protein resides in the chloroplast thylakoid membrane. Functionally, component of the cytochrome b6-f complex, which mediates electron transfer between photosystem II (PSII) and photosystem I (PSI), cyclic electron flow around PSI, and state transitions. The polypeptide is Cytochrome b6-f complex subunit 8 (Angiopteris evecta (Mule's foot fern)).